We begin with the raw amino-acid sequence, 957 residues long: SLIT and NTRK-like protein 5 (957 aa).

Residues 1 to 40 (MHVCCPPVTLEQDLHRKMHSWMLQTLAFAVTSLVLSCAET) form the signal peptide. Residues 41–664 (IDYYGEICDN…GTGASSVPLS (624 aa)) lie on the Extracellular side of the membrane. LRR repeat units lie at residues 82 to 103 (PIYHLLLSGNLLSRLYPNEFVN), 106 to 127 (GASILHLGSNVIQDIETGAFHG), 130 to 151 (GLRRLHLNNNKLELLRDDTFLG), 154 to 175 (NLEYLQVDYNYISVIEPNAFGK), 178 to 199 (MLQVLILNDNLLSGLPNNLFRF), and 201 to 222 (PLTHLDLRGNRLKLLPYVGLLQ). Asparagine 103 carries an N-linked (GlcNAc...) asparagine glycan. Residues 235 to 286 (NPWNCSCELISLKDWLDSISYSALVGDVVCETPFRLHGRDLDEVSKQELCPR) form the LRRCT 1 domain. The interval 317–358 (ATSSSAVYKPPLKPPKGTRQPNKPRVRPTSRQPSKDLGYSNY) is disordered. The LRRNT domain occupies 365–407 (QTKSPVPLECPTACTCNLQISDLGLNVNCQERKIESIAELQPK). LRR repeat units lie at residues 410–431 (NPKKMYLTENYITVVRRTDFLE), 434–455 (GLDLLHLGNNRISMIQDRAFGD), 458–479 (NLRRLYLNGNRIERLSPELFYG), 482–503 (SLQYLFLQYNLIREIQAGTFDP), 506–527 (NLQLLFLNNNQLQAMPSGVFSG), and 529–550 (TLLRLNLRGNSFTSLPVSGVLD). The 52-residue stretch at 563–614 (NPWDCTCDVVGMKLWIEQLKVGVLVDEVICKAPKKFAETYMRSIKSELLCPD) folds into the LRRCT 2 domain. Over residues 623–632 (PTPSSIQVPS) the composition is skewed to low complexity. The segment at 623–642 (PTPSSIQVPSRTNAATPAVR) is disordered. Asparagine 644 is a glycosylation site (N-linked (GlcNAc...) asparagine). A helical transmembrane segment spans residues 665 to 685 (VLILSLLLVFIMSVFVAAGLF). Residues 686-957 (VLVMKRRKKN…LEKQTTFSQF (272 aa)) are Cytoplasmic-facing. Residues 789 to 844 (SNHHLQQQPPPPPQQPQQQPPPQMQMQPGEEERRESHHLRSPAYSVSTIEPREDLL) are disordered. A compositionally biased stretch (pro residues) spans 796–811 (QPPPPPQQPQQQPPPQ).

Belongs to the SLITRK family. As to expression, in the adult, significant expression is detected only in the brain. In the embryo, expressed in the subventricular zone, cortical plate, pyramidal layer of hippocampus, thalamus and hypothalamus.

The protein resides in the membrane. Suppresses neurite outgrowth. The chain is SLIT and NTRK-like protein 5 (Slitrk5) from Mus musculus (Mouse).